We begin with the raw amino-acid sequence, 416 residues long: TNF receptor-associated factor 1 (416 aa).

The interval 1–24 (MASSSGSSPRPAPDENEFPFGCPP) is disordered. S146 carries the post-translational modification Phosphoserine. The stretch at 182 to 264 (MKEKLLAELE…QSLRLMEEAS (83 aa)) forms a coiled coil. Glycyl lysine isopeptide (Lys-Gly) (interchain with G-Cter in ubiquitin) cross-links involve residues K185 and K193. An MATH domain is found at 266 to 412 (DGTFLWKITN…DDTMFLKCIV (147 aa)).

In terms of assembly, homotrimer. Heterotrimer with TRAF2. Interacts with TNFRSF1A/TNFR1, TNFRSF1B/TNFR2, TNFRSF4, TNFRSF5/CD40, TNFRSF8/CD30, TNFRSF9/CD137, TNFRSF11A/RANK, TNFRSF13C, TNFRSF18/AITR, TNFRSF17/BCMA, TNFRSF19/TROY, TNFRSF19L/RELT, XEDAR, EDAR, Epstein-Barr virus BNFL1/LMP-1, TANK/ITRAF, TRAIP and RIPK2. Interacts with BIRC2 and BIRC3 N-terminus; a single BIRC2 or BIRC3 molecule interacts with a heterotrimer formed by TRAF1 and TRAF2. Interacts with NFATC2IP, TRAFD1 and with HIVEP3. Interacts with MAP3K14. Interacts with GPS2. In terms of processing, polyubiquitinated by BIRC2 and/or BIRC3, leading to its subsequent proteasomal degradation. Ubiquitinated by the SCF(FBXL2) complex, leading to its degradation by the proteasome.

Its function is as follows. Adapter molecule that regulates the activation of NF-kappa-B and JNK. Plays a role in the regulation of cell survival and apoptosis. The heterotrimer formed by TRAF1 and TRAF2 is part of a E3 ubiquitin-protein ligase complex that promotes ubiquitination of target proteins, such as MAP3K14. The TRAF1/TRAF2 complex recruits the antiapoptotic E3 protein-ubiquitin ligases BIRC2 and BIRC3 to TNFRSF1B/TNFR2. The polypeptide is TNF receptor-associated factor 1 (TRAF1) (Homo sapiens (Human)).